The sequence spans 954 residues: Glycine dehydrogenase (decarboxylating) (954 aa).

Lys-704 is subject to N6-(pyridoxal phosphate)lysine.

Belongs to the GcvP family. The glycine cleavage system is composed of four proteins: P, T, L and H. The cofactor is pyridoxal 5'-phosphate.

It catalyses the reaction N(6)-[(R)-lipoyl]-L-lysyl-[glycine-cleavage complex H protein] + glycine + H(+) = N(6)-[(R)-S(8)-aminomethyldihydrolipoyl]-L-lysyl-[glycine-cleavage complex H protein] + CO2. The glycine cleavage system catalyzes the degradation of glycine. The P protein binds the alpha-amino group of glycine through its pyridoxal phosphate cofactor; CO(2) is released and the remaining methylamine moiety is then transferred to the lipoamide cofactor of the H protein. This is Glycine dehydrogenase (decarboxylating) from Rhizobium etli (strain ATCC 51251 / DSM 11541 / JCM 21823 / NBRC 15573 / CFN 42).